Reading from the N-terminus, the 202-residue chain is Neuroligin-3 (202 aa).

Residues 1 to 202 (RYGSPTYFYA…TGTRMQGHSW (202 aa)) are Extracellular-facing. Residues Cys15 and Cys49 are joined by a disulfide bond. N-linked (GlcNAc...) asparagine glycosylation occurs at Asn50. Residues 154–202 (LRIPPTAPTSPAGPMARPGAPSGQPSHLPTATRMPRGPGTGTRMQGHSW) form a disordered region.

It belongs to the type-B carboxylesterase/lipase family. Homodimer, and heterodimer with NLGN1 and NLGN2. Interacts with neurexins NRXN1, NRXN2 and NRXN3. Interaction with neurexins is mediated by heparan sulfate glycan modification on neurexin. Interacts (via its C-terminus) with DLG4/PSD-95 (via PDZ domain 3).

It localises to the cell membrane. Its subcellular location is the synapse. Cell surface protein involved in cell-cell-interactions via its interactions with neurexin family members. Plays a role in synapse function and synaptic signal transmission, and probably mediates its effects by recruiting and clustering other synaptic proteins. May promote the initial formation of synapses, but is not essential for this. May also play a role in glia-glia or glia-neuron interactions in the developing peripheral nervous system. This is Neuroligin-3 (NLGN3) from Macaca mulatta (Rhesus macaque).